A 101-amino-acid polypeptide reads, in one-letter code: Urease subunit beta (101 aa).

It belongs to the urease beta subunit family. In terms of assembly, heterotrimer of UreA (gamma), UreB (beta) and UreC (alpha) subunits. Three heterotrimers associate to form the active enzyme.

It localises to the cytoplasm. The enzyme catalyses urea + 2 H2O + H(+) = hydrogencarbonate + 2 NH4(+). It participates in nitrogen metabolism; urea degradation; CO(2) and NH(3) from urea (urease route): step 1/1. In Haemophilus influenzae (strain 86-028NP), this protein is Urease subunit beta.